Consider the following 738-residue polypeptide: 1,4-alpha-glucan branching enzyme GlgB (738 aa).

The active-site Nucleophile is the Asp-417. The Proton donor role is filled by Glu-472.

This sequence belongs to the glycosyl hydrolase 13 family. GlgB subfamily. In terms of assembly, monomer.

The catalysed reaction is Transfers a segment of a (1-&gt;4)-alpha-D-glucan chain to a primary hydroxy group in a similar glucan chain.. It functions in the pathway glycan biosynthesis; glycogen biosynthesis. Functionally, catalyzes the formation of the alpha-1,6-glucosidic linkages in glycogen by scission of a 1,4-alpha-linked oligosaccharide from growing alpha-1,4-glucan chains and the subsequent attachment of the oligosaccharide to the alpha-1,6 position. This Burkholderia pseudomallei (strain K96243) protein is 1,4-alpha-glucan branching enzyme GlgB.